The chain runs to 465 residues: Asparagine--tRNA ligase (465 aa).

It belongs to the class-II aminoacyl-tRNA synthetase family. As to quaternary structure, homodimer.

It is found in the cytoplasm. It carries out the reaction tRNA(Asn) + L-asparagine + ATP = L-asparaginyl-tRNA(Asn) + AMP + diphosphate + H(+). The sequence is that of Asparagine--tRNA ligase from Pseudoalteromonas atlantica (strain T6c / ATCC BAA-1087).